A 380-amino-acid polypeptide reads, in one-letter code: Cytoplasmic protein NCK2 (380 aa).

Thr2 is subject to N-acetylthreonine. The SH3 1 domain maps to 2 to 61; the sequence is TEEVIVIAKWDYTAQQDQELDIKKNERLWLLDDSKTWWRVRNAANRTGYVPSNYVERKNS. The disordered stretch occupies residues 79-102; that stretch reads KTRRKTSARDASPTPSTDAEYPAN. Position 90 is a phosphoserine (Ser90). Residue Thr92 is modified to Phosphothreonine. Ser94 carries the post-translational modification Phosphoserine. A Phosphotyrosine modification is found at Tyr110. SH3 domains are found at residues 111–170 and 195–257; these read DLNI…EEVD and RVLH…VLSD. The region spanning 285 to 380 is the SH2 domain; that stretch reads WYYGNVTRHQ…EKLYLVRALQ (96 aa).

Interacts with DOCK1, LIMS1 and TGFB1I1. Part of a complex containing PPP1R15B, PP1 and NCK2. Interacts with FASLG. Interacts with AXL. Interacts with PAK1, PKN2 and SOS1. Interacts (via SH2 domain) with EGFR. Interacts (via SH2 domain) with DDR1. Interacts with IRS1. In terms of processing, phosphorylated. Ubiquitous.

It is found in the cytoplasm. It localises to the endoplasmic reticulum. In terms of biological role, adapter protein which associates with tyrosine-phosphorylated growth factor receptors or their cellular substrates. Maintains low levels of EIF2S1 phosphorylation by promoting its dephosphorylation by PP1. Plays a role in ELK1-dependent transcriptional activation in response to activated Ras signaling. This chain is Cytoplasmic protein NCK2 (NCK2), found in Homo sapiens (Human).